The primary structure comprises 213 residues: Large ribosomal subunit protein uL1 (213 aa).

It belongs to the universal ribosomal protein uL1 family. Part of the 50S ribosomal subunit.

Functionally, binds directly to 23S rRNA. Probably involved in E site tRNA release. Protein L1 is also a translational repressor protein, it controls the translation of its operon by binding to its mRNA. The protein is Large ribosomal subunit protein uL1 of Methanocella arvoryzae (strain DSM 22066 / NBRC 105507 / MRE50).